Here is a 329-residue protein sequence, read N- to C-terminus: Fructose-1,6-bisphosphatase class 1 (329 aa).

Residues glutamate 84, aspartate 103, leucine 105, and aspartate 106 each contribute to the Mg(2+) site. Substrate is bound by residues 106–109 (DGSS), asparagine 196, and lysine 262. Glutamate 268 lines the Mg(2+) pocket.

Belongs to the FBPase class 1 family. In terms of assembly, homotetramer. Requires Mg(2+) as cofactor.

It is found in the cytoplasm. It carries out the reaction beta-D-fructose 1,6-bisphosphate + H2O = beta-D-fructose 6-phosphate + phosphate. The protein operates within carbohydrate biosynthesis; gluconeogenesis. The sequence is that of Fructose-1,6-bisphosphatase class 1 from Shewanella sediminis (strain HAW-EB3).